The sequence spans 312 residues: MLEVRSMDMTPKSPEPESETPTRIQPAKPISFSNGIIKRHHHHHHNNNKVTYKECLKNHAAAIGGHALDGCGEFMPSPSSTPSDPTSLKCAACGCHRNFHRRETDDSSAVPPPSLLPSSTTTAAIEYQPHHRHHPPPPLAPPLPRSPNSSSPPPISSSYMLLALSGNNKTAPFSDLNFAAAANHLSATPGSRKRFRTKFSSNQKEKMHEFADRIGWKIQKRDEDEVRDFCREIGVDKGVLKVWMHNNKNSFKFSGGGATTVQRNDNGIGGENSNDDGVRGLANDGDGGGGRFESDSGGADGGGNVNASSSSS.

A disordered region spans residues 1–27 (MLEVRSMDMTPKSPEPESETPTRIQPA). The residue at position 13 (Ser13) is a Phosphoserine. The ZF-HD dimerization-type; degenerate zinc-finger motif lies at 52–103 (YKECLKNHAAAIGGHALDGCGEFMPSPSSTPSDPTSLKCAACGCHRNFHRRE). Disordered regions lie at residues 128-155 (QPHHRHHPPPPLAPPLPRSPNSSSPPPI) and 253-312 (FSGG…SSSS). Over residues 136–155 (PPPLAPPLPRSPNSSSPPPI) the composition is skewed to pro residues. Positions 192–255 (RKRFRTKFSS…NNKNSFKFSG (64 aa)) form a DNA-binding region, homeobox. A Phosphoserine modification is found at Ser273.

In terms of assembly, homo- and heterodimer with other ZFHD proteins. Interacts with MIF3; this interaction prevents nuclear localization and DNA-binding to inhibit transcription regulation activity. Binds to ZHD1, ZHD2 and ZHD11. In terms of tissue distribution, mostly expressed in flowers, stems and inflorescence and, to a lower extent, in leaves and stems.

Its subcellular location is the nucleus. Putative transcription factor. This Arabidopsis thaliana (Mouse-ear cress) protein is Zinc-finger homeodomain protein 9 (ZHD9).